Reading from the N-terminus, the 120-residue chain is uncharacterized protein (120 aa).

A run of 3 helical transmembrane segments spans residues phenylalanine 20–leucine 39, glycine 52–isoleucine 71, and isoleucine 86–glycine 108.

The protein resides in the cell membrane. This is an uncharacterized protein from Pasteurella multocida (strain Pm70).